The primary structure comprises 307 residues: N-acetylmuramic acid 6-phosphate etherase (307 aa).

One can recognise an SIS domain in the interval 62-225 (IVSSFNRGGR…STASMIRIGK (164 aa)). Residue Glu90 is the Proton donor of the active site. Glu121 is a catalytic residue.

It belongs to the GCKR-like family. MurNAc-6-P etherase subfamily. Homodimer.

The catalysed reaction is N-acetyl-D-muramate 6-phosphate + H2O = N-acetyl-D-glucosamine 6-phosphate + (R)-lactate. It functions in the pathway amino-sugar metabolism; 1,6-anhydro-N-acetylmuramate degradation. The protein operates within amino-sugar metabolism; N-acetylmuramate degradation. It participates in cell wall biogenesis; peptidoglycan recycling. In terms of biological role, specifically catalyzes the cleavage of the D-lactyl ether substituent of MurNAc 6-phosphate, producing GlcNAc 6-phosphate and D-lactate. Together with AnmK, is also required for the utilization of anhydro-N-acetylmuramic acid (anhMurNAc) either imported from the medium or derived from its own cell wall murein, and thus plays a role in cell wall recycling. The protein is N-acetylmuramic acid 6-phosphate etherase of Pseudoalteromonas atlantica (strain T6c / ATCC BAA-1087).